The primary structure comprises 645 residues: 1,4-alpha-glucan branching enzyme GlgB (645 aa).

The active-site Nucleophile is the Asp309. The Proton donor role is filled by Glu352. The tract at residues 619-645 (VKTRKGSKKQDGSKTKVRSNVTSRGKR) is disordered. Over residues 636-645 (RSNVTSRGKR) the composition is skewed to polar residues.

It belongs to the glycosyl hydrolase 13 family. GlgB subfamily. As to quaternary structure, monomer.

The enzyme catalyses Transfers a segment of a (1-&gt;4)-alpha-D-glucan chain to a primary hydroxy group in a similar glucan chain.. It functions in the pathway glycan biosynthesis; glycogen biosynthesis. Catalyzes the formation of the alpha-1,6-glucosidic linkages in glycogen by scission of a 1,4-alpha-linked oligosaccharide from growing alpha-1,4-glucan chains and the subsequent attachment of the oligosaccharide to the alpha-1,6 position. In Bacillus cereus (strain 03BB102), this protein is 1,4-alpha-glucan branching enzyme GlgB.